Reading from the N-terminus, the 260-residue chain is MLEILYQDEWLVAVNKPSGWLVHRSWLDRDEKVVVMQTVRDQIGQHVFTAHRLDRPTSGVLLMGLSSEAGRLLAQQFEQHQIQKRYHAIVRGWLMEEAVLDYPLVEELDKIADKFAREDKGPQPAVTHYRGLATVEMPVATGRYPTTRYGLVELEPKTGRKHQLRRHLAHLRHPIIGDSKHGDLRQNRSGAEHFGLQRLMLHASQLSLTHPFTGEPLTIHAGLDDTWMQALSQFGWRGLLPENERVEFSAPSGQDGEISS.

Residue Asp54 is part of the active site.

Belongs to the pseudouridine synthase RluA family.

It catalyses the reaction uridine(65) in tRNA = pseudouridine(65) in tRNA. In terms of biological role, responsible for synthesis of pseudouridine from uracil-65 in transfer RNAs. The protein is tRNA pseudouridine synthase C (truC) of Escherichia coli (strain K12).